Consider the following 392-residue polypeptide: 1-deoxy-D-xylulose 5-phosphate reductoisomerase (392 aa).

Positions 10, 11, 12, 13, 38, and 124 each coordinate NADPH. 1-deoxy-D-xylulose 5-phosphate is bound at residue lysine 125. Position 126 (glutamate 126) interacts with NADPH. Aspartate 150 provides a ligand contact to Mn(2+). Residues serine 151, glutamate 152, serine 176, and histidine 199 each contribute to the 1-deoxy-D-xylulose 5-phosphate site. Glutamate 152 is a Mn(2+) binding site. Glycine 205 serves as a coordination point for NADPH. Residues serine 212, asparagine 217, lysine 218, and glutamate 221 each coordinate 1-deoxy-D-xylulose 5-phosphate. Position 221 (glutamate 221) interacts with Mn(2+).

Belongs to the DXR family. Mg(2+) is required as a cofactor. The cofactor is Mn(2+).

It catalyses the reaction 2-C-methyl-D-erythritol 4-phosphate + NADP(+) = 1-deoxy-D-xylulose 5-phosphate + NADPH + H(+). The protein operates within isoprenoid biosynthesis; isopentenyl diphosphate biosynthesis via DXP pathway; isopentenyl diphosphate from 1-deoxy-D-xylulose 5-phosphate: step 1/6. In terms of biological role, catalyzes the NADPH-dependent rearrangement and reduction of 1-deoxy-D-xylulose-5-phosphate (DXP) to 2-C-methyl-D-erythritol 4-phosphate (MEP). The chain is 1-deoxy-D-xylulose 5-phosphate reductoisomerase from Gloeobacter violaceus (strain ATCC 29082 / PCC 7421).